Reading from the N-terminus, the 65-residue chain is Small ribosomal subunit protein bS21 (65 aa).

The segment at Glu-39 to Asp-65 is disordered. Basic residues predominate over residues Ile-43 to Asp-65.

Belongs to the bacterial ribosomal protein bS21 family.

The sequence is that of Small ribosomal subunit protein bS21 from Pelobacter propionicus (strain DSM 2379 / NBRC 103807 / OttBd1).